Here is a 3125-residue protein sequence, read N- to C-terminus: MSTIVFGSFTCHLDAAIHQDNADRLAKAWTRPENRQVSNAHLLCRRAAESLINTYESATASAWKGLEEKLQPMFAKREFSKTVTKRKGLRCFKESSEKFIEKKLRKQYQEERERLQFLNGPDAIVNQISVDKCEASVRVPSPHIIEKPSFVTPSMKKKVVFKKVRMSEASLQLFMRRVAANAKANGQKVEIIGRKRVVGNYTTKSRLTYFRTHVRHLDGSKPRYDLVLDEATKKILQLFANTSGFHHVHKKGEVTPGMSGFVVNPMNLSDPMQVYDTDLFIVRGKHNSILVDSRCKVSKKQSNEIIHYSDPGKQFSDGFTNSFMQCKLRETDHQCTSDLDVKECGYVAALVCQAIIPCGKITCLQCAQKYSYMSQQEIRDRFSTVIEQHEKTVMDNYPQFSHVLAFLKRYRELMRVENQNYEAFKDITHMIGERKEAPFSHLNKINELIIKGGMMSAQDYIEASDHLRELARYQKNRTENIRSGSIKAFRNKISSKAHVNMQLMCDNQLDTNGNFVWGQREYHAKRFFRNYFDVIDVSEGYRRHIVRENPRGIRKLAIGNLVMSTNLAALRKQLLGEECIHFEVSKECTSKRGENFVYQCCCVTHEDGTPLESEIISPTKNHLVVGNSGDSKYVDLPTAKGGAMFIAKAGYCYINIFLAMLININEDEAKSFTKTVRDTLVPKLGTWPSMMDLATACHFLAVLYPETRNAELPRILVDHEAKIFHVVDSFGSLSTGMHVLKANTINQLISFASDTLDSNMKTYLVGGLEVDKCDEFKNVKLLIRSIYKPQIMEQVLKEEPYLLLMSVLSPGVLMALFNSGSLEKATQYWITRSHSLAAITSMLSALAAKVSLASTLNAQMSVIDEHAAVLYDSVFVGTQPYASYMMAVKTLERMKARTESDHTLNDLGFSVLRQATPHLVEKSYLQELEQAWKELSWSEKFSAILESQRWRKHIPKPFIPKDGADLGGRYDISVRSLLGNQYKRLRDVVRWKRDDVVCYTYQSMGKLFCKAIGISPSFLPSTLKMLDMLIVFSLLLSIGATCNSMVNEHKHLKQLAADREDKKRFKRLQVLYTRLSEKVGCTPTADEFLEYVGDENPDLLKHAEDLIGDGQVVVHQSKRDSQANLERVVAFVALVMMLFDSERSDGVYKILNKLKGIMGSVDRAVHHQSLDDIEDILDEKKLTVDFVLQSNEVAPTVPFDSTFEKWWMNQLETGNVIPHYRTEGHFLEFTRENAAHIANEVMHGSHQDILIRGAVGSGKSTGLPFHLSKKGHVLLIEPTRPLAENVCKQLRGQPFNVNPTLRMRGMSTFGSTPITVMTSGYALHFLANNPTYLDNYKCIIFDECHVHDASAMAFRCLLSEYSYPGKILKVSATPPGHEVEFKTQKEVKVIVEESLSFQQFVSNLGTGCNSDILKHGVNVLVYVASYNEVDTLSKLLTDRSFKVSKVDGRTMKVGNVEIPTSGTQAKPHFVVATNIIENGVTLDIDVVVDFGLKVVPVLDIDNRLVRYTKKSISYGERIQRLGRVGRNKPGAALRIGFTEKGLTQIPPIIATEAAFLCFTYGLPVMTNGVSTSLLAMCTVKQARTMQQFELSPFYTVALVRFDGTMHQEIFRLLKSYRLRDSEVILNKLAIPNSNVCGWMSVRDYKRQGCNLDLDENIRVPFYVKDIPETLHERIWQAVETHKSDAGFGRICSSSACKIAYTLQTDIHSIPRTIKIIDALLEQERTKQAHFRAMTSQSCSSSNFSLSSITSAIRSKYAKDHTEENIGVLQMAKSQLLEFKNLNIDPSYPELIRNFGALECVHHQTKEGVSKALQLKGHWNKRLITRDATLMLGVLGGGAWMIFSYLRDSFKEEVIHQGFNRRQRQKLKFRQARDNRMAREVYGDDSTMEAYFGSAYSKKGKSKGKTRGMGTKTRKFVNMYGYDPTDYNFVRFVDPLTGHTLDESPLMDINLVQEHFSQIRNDYIGDDKITMQHIMSNPGIVAYYIKDATQKALKVDLTPHNPLRVCDKTATIAGFPEREFELRQTGHPVFVEPNAIPKINEEGDEEVDHESKSLFRGLRDYNPIASSICQLNNSSGARQSEMFGLGFGGLIVTNQHLFKRNDGELTIRSHHGEFVVKDTKTLKLLPCKGRDIVIIRLPKDFPPFPRRLQFRTPTTEDRVCLIGSNFQTKSISSTMSETSATYPVDNSHFWKHWISTKDGHCGLPIVSTRDGSILGLHSLANSTNTQNFYAAFPDNFETTYLSNQDNDNWIKQWRYNPDEVCWGSLQLKRDIPQSPFTICKLLTDLDGEFVYTQSKTTHWLRDRLEGNLKAVGACPGQLVTKHVVKGKCTLFETYLLTHPEEHEFFRPLMGAYQKSALNKDAYVKDLMKYSKPIVVGAVDCDQFERAVDVVISMLISKGFEECNYVTDPDDIFSALNMKAAVGALYSGKKRDYFENVSDQDKESFVRASCKRLFMGKKGVWNGSLKAELRPKEKVEANKTRSFTAAPIDTLLGGKVCVDDFNNQFYSLNLHCPWSVGMTKFRGGWDKLLKALPEGWIYCDADGSQFDSSLSPYLINAVLNIRLAFMEEWDIGEQMLSNLYTEIVYTPIATPDGTIVKKFKGNNSGQPSTVVDNTLMVILAMTYSLLKLGHHPDTHDCICRYFVNGDDLVLAVHPAYESIYDELQEHFSQLGLNYTFTTKTENKEELWFMSHKGVLYDDMYIPKLEPERIVSILEWDRSNEPIHRLEAICASMVEAWGYKELLREIRKFYSWVLEQAPYNALSKDGKAPYIAETALKKLYTDTEASETEIERYLEAFYDNINDDGESNVVVHQADEREDEEEVDALQPPPVIQPAPRTTAPMLNPIFTPATTQPATKPVSQVSGPQLQTFGTYSHEDASPSNSNALVNTNRDRDVDAGSTGTFTVPRLKAMTSKLSLPKVKGKAIMNLNHLAHYSPAQVDLSNTRAPQSCFQTWYEGVKRDYDVTDDEMSIILNGLMVWCIENGTSPNINGMWVMMDGETQVEYPIKPLLDHAKPTFRQIMAHFSNVAEAYIEKRNYEKAYMPRYGIQRNLTDYSLARYAFDFYEMTSTTPVRAREAHIQMKAAALRNVQNRLFGLDGNVGTQEEDTERHTAGDVNRNMHNLLGMRGV.

The Peptidase S30 domain occupies 165-308 (RMSEASLQLF…KKQSNEIIHY (144 aa)). Residues H216, D225, and S259 each act as for P1 proteinase activity in the active site. The Involved in interaction with stylet and aphid transmission signature appears at 360-363 (KITC). Positions 618–620 (PTK) match the Involved in virions binding and aphid transmission motif. The region spanning 644–766 (MFIAKAGYCY…DSNMKTYLVG (123 aa)) is the Peptidase C6 domain. Catalysis depends on for helper component proteinase activity residues C652 and H725. The Helicase ATP-binding domain occupies 1240–1392 (EVMHGSHQDI…TQKEVKVIVE (153 aa)). 1253–1260 (GAVGSGKS) serves as a coordination point for ATP. The DECH box signature appears at 1342–1345 (DECH). A Helicase C-terminal domain is found at 1411-1570 (DILKHGVNVL…GLPVMTNGVS (160 aa)). The short motif at 1897-1904 (KKGKSKGK) is the Nuclear localization signal element. Position 1919 is an O-(5'-phospho-RNA)-tyrosine (Y1919). The region spanning 2050 to 2268 (SKSLFRGLRD…VCWGSLQLKR (219 aa)) is the Peptidase C4 domain. Residues H2095, D2130, and C2200 each act as for nuclear inclusion protein A activity in the active site. In terms of domain architecture, RdRp catalytic spans 2534–2658 (WIYCDADGSQ…AVHPAYESIY (125 aa)). The disordered stretch occupies residues 2869-2897 (TYSHEDASPSNSNALVNTNRDRDVDAGST). 3 positions are modified to phosphoserine: S2876, S2896, and S2913. Residues 2876–2886 (SPSNSNALVNT) are compositionally biased toward polar residues. A phosphothreonine mark is found at T3049 and T3108.

Belongs to the potyviridae genome polyprotein family. As to quaternary structure, interacts with host eIF4E protein (via cap-binding region); this interaction mediates the translation of the VPg-viral RNA conjugates. Part of a complex that comprises VPg, RNA, host EIF4E and EIF4G; this interaction mediates the translation of the VPg-viral RNA conjugates. Post-translationally, VPg is uridylylated by the polymerase and is covalently attached to the 5'-end of the genomic RNA. This uridylylated form acts as a nucleotide-peptide primer for the polymerase. Potyviral RNA is expressed as two polyproteins which undergo post-translational proteolytic processing. Genome polyprotein is processed by NIa-pro, P1 and HC-pro proteinases resulting in the production of at least ten individual proteins. P3N-PIPO polyprotein is cleaved by P1 and HC-pro proteinases resulting in the production of three individual proteins. The P1 proteinase and the HC-pro cleave only their respective C-termini autocatalytically. 6K1 is essential for proper proteolytic separation of P3 from CI.

The protein localises to the host cytoplasmic vesicle. It is found in the host nucleus. It localises to the virion. The catalysed reaction is RNA(n) + a ribonucleoside 5'-triphosphate = RNA(n+1) + diphosphate. It catalyses the reaction Hydrolyzes glutaminyl bonds, and activity is further restricted by preferences for the amino acids in P6 - P1' that vary with the species of potyvirus, e.g. Glu-Xaa-Xaa-Tyr-Xaa-Gln-|-(Ser or Gly) for the enzyme from tobacco etch virus. The natural substrate is the viral polyprotein, but other proteins and oligopeptides containing the appropriate consensus sequence are also cleaved.. The enzyme catalyses Hydrolyzes a Gly-|-Gly bond at its own C-terminus, commonly in the sequence -Tyr-Xaa-Val-Gly-|-Gly, in the processing of the potyviral polyprotein.. Required for aphid transmission and also has proteolytic activity. Only cleaves a Gly-Gly dipeptide at its own C-terminus. Interacts with virions and aphid stylets. Acts as a suppressor of RNA-mediated gene silencing, also known as post-transcriptional gene silencing (PTGS), a mechanism of plant viral defense that limits the accumulation of viral RNAs. May have RNA-binding activity. In terms of biological role, has helicase activity. It may be involved in replication. Its function is as follows. Indispensable for virus replication. Reduces the abundance of host transcripts related to jasmonic acid biosynthesis therefore altering the host defenses. In order to increase its own stability, decreases host protein degradation pathways. Functionally, indispensable for virus replication. Mediates the cap-independent, EIF4E-dependent translation of viral genomic RNAs. Binds to the cap-binding site of host EIF4E and thus interferes with the host EIF4E-dependent mRNA export and translation. VPg-RNA directly binds EIF4E and is a template for transcription. Also forms trimeric complexes with EIF4E-EIF4G, which are templates for translation. In terms of biological role, has RNA-binding and proteolytic activities. Its function is as follows. An RNA-dependent RNA polymerase that plays an essential role in the virus replication. Functionally, involved in aphid transmission, cell-to-cell and systemis movement, encapsidation of the viral RNA and in the regulation of viral RNA amplification. The chain is Genome polyprotein from Plum pox potyvirus (isolate NAT) (PPV).